The primary structure comprises 447 residues: Tryptophan synthase beta chain (447 aa).

Position 92 is an N6-(pyridoxal phosphate)lysine (Lys-92). The segment at 408–447 (GLAVKGGEQPKEFSDGPPLGKLAPSGGSAVREATSVGARK) is disordered.

This sequence belongs to the TrpB family. As to quaternary structure, tetramer of two alpha and two beta chains. It depends on pyridoxal 5'-phosphate as a cofactor.

The catalysed reaction is (1S,2R)-1-C-(indol-3-yl)glycerol 3-phosphate + L-serine = D-glyceraldehyde 3-phosphate + L-tryptophan + H2O. It functions in the pathway amino-acid biosynthesis; L-tryptophan biosynthesis; L-tryptophan from chorismate: step 5/5. Its function is as follows. The beta subunit is responsible for the synthesis of L-tryptophan from indole and L-serine. In Polaromonas sp. (strain JS666 / ATCC BAA-500), this protein is Tryptophan synthase beta chain.